We begin with the raw amino-acid sequence, 407 residues long: Immunoglobulin superfamily member 5 (407 aa).

At 1–266 (MGQKERSTAD…LGFSLPTWGK (266 aa)) the chain is on the extracellular side. Ig-like V-type domains are found at residues 39–139 (NEVI…LTVQ) and 142–231 (GELF…ATVN). 4 N-linked (GlcNAc...) asparagine glycosylation sites follow: Asn59, Asn103, Asn210, and Asn231. 2 cysteine pairs are disulfide-bonded: Cys60–Cys123 and Cys163–Cys215. The helical transmembrane segment at 267 to 285 (VGLGLAGTMLLTPTCTLTI) threads the bilayer. The Cytoplasmic segment spans residues 286 to 407 (RCCCCRRRCC…PEKVSNTTVV (122 aa)). Over residues 320 to 331 (KSEKEKTNKETE) the composition is skewed to basic and acidic residues. Positions 320–407 (KSEKEKTNKE…PEKVSNTTVV (88 aa)) are disordered. Polar residues predominate over residues 389 to 407 (PQASFNLASPEKVSNTTVV).

The protein belongs to the immunoglobulin superfamily. Interacts with MAGI1 at tight junctions, forms a tripartite complex with NPHS1. Interacts with LNX1 isoform 2 via its PDZ 2 domain, it may also interact with other isoforms containing this domain.

The protein resides in the apical cell membrane. Its subcellular location is the cell junction. It is found in the tight junction. Functionally, provides, together with MAGI1, an adhesion machinery at tight junctions, which may regulate the permeability of kidney glomerulus and small intestinal epithelial cells. Mediates calcium-independent homophilic cell adhesion. In testis, it may function as a cell adhesion molecule rather than a tight-junction protein. It may participate in the adhesion between spermatogonia-spermatogonia, spermatogonia-Sertoli cells, and Sertoli cells-Sertoli cells. This Homo sapiens (Human) protein is Immunoglobulin superfamily member 5 (IGSF5).